The chain runs to 497 residues: Probable gamma-aminobutyrate transaminase 2, mitochondrial (497 aa).

The transit peptide at 1 to 37 directs the protein to the mitochondrion; the sequence is MNLIKHAAFAASFQGETDCTSHASARKFSTSGSSPLL. 153 to 154 is a pyridoxal 5'-phosphate binding site; that stretch reads GS. Tyr-186 is a binding site for substrate. Asp-293 provides a ligand contact to pyridoxal 5'-phosphate. Lys-322 is a binding site for substrate. The residue at position 322 (Lys-322) is an N6-(pyridoxal phosphate)lysine.

Belongs to the class-III pyridoxal-phosphate-dependent aminotransferase family.

Its subcellular location is the mitochondrion. The catalysed reaction is 4-aminobutanoate + pyruvate = succinate semialdehyde + L-alanine. The enzyme catalyses 4-aminobutanoate + glyoxylate = succinate semialdehyde + glycine. Transaminase that degrades gamma-amino butyric acid (GABA). The chain is Probable gamma-aminobutyrate transaminase 2, mitochondrial from Oryza sativa subsp. indica (Rice).